Consider the following 57-residue polypeptide: uncharacterized protein (57 aa).

A helical membrane pass occupies residues 15-37; the sequence is GLAGLICIGLTISSGFSGSSILI.

The protein localises to the membrane. This is an uncharacterized protein from Dictyostelium discoideum (Social amoeba).